A 196-amino-acid chain; its full sequence is GTP cyclohydrolase 1 (196 aa).

3 residues coordinate Zn(2+): cysteine 85, histidine 88, and cysteine 158.

Belongs to the GTP cyclohydrolase I family. As to quaternary structure, homomer.

It catalyses the reaction GTP + H2O = 7,8-dihydroneopterin 3'-triphosphate + formate + H(+). It participates in cofactor biosynthesis; 7,8-dihydroneopterin triphosphate biosynthesis; 7,8-dihydroneopterin triphosphate from GTP: step 1/1. The protein is GTP cyclohydrolase 1 of Corynebacterium aurimucosum (strain ATCC 700975 / DSM 44827 / CIP 107346 / CN-1) (Corynebacterium nigricans).